Here is a 107-residue protein sequence, read N- to C-terminus: Iron-binding protein IscA (107 aa).

Fe cation is bound by residues cysteine 35, cysteine 99, and cysteine 101.

This sequence belongs to the HesB/IscA family. In terms of assembly, homodimer; may form tetramers and higher multimers. Fe cation serves as cofactor.

Is able to transfer iron-sulfur clusters to apo-ferredoxin. Multiple cycles of [2Fe2S] cluster formation and transfer are observed, suggesting that IscA acts catalytically. Recruits intracellular free iron so as to provide iron for the assembly of transient iron-sulfur cluster in IscU in the presence of IscS, L-cysteine and the thioredoxin reductase system TrxA/TrxB. This is Iron-binding protein IscA from Pectobacterium carotovorum subsp. carotovorum (strain PC1).